The following is a 91-amino-acid chain: ATP synthase subunit c 2 (91 aa).

A run of 2 helical transmembrane segments spans residues 4 to 24 (FSMC…GTGI) and 53 to 73 (IGLA…LIIL).

It belongs to the ATPase C chain family. F-type ATPases have 2 components, F(1) - the catalytic core - and F(0) - the membrane proton channel. F(1) has five subunits: alpha(3), beta(3), gamma(1), delta(1), epsilon(1). F(0) has three main subunits: a(1), b(2) and c(10-14). The alpha and beta chains form an alternating ring which encloses part of the gamma chain. F(1) is attached to F(0) by a central stalk formed by the gamma and epsilon chains, while a peripheral stalk is formed by the delta and b chains.

Its subcellular location is the cell inner membrane. Functionally, f(1)F(0) ATP synthase produces ATP from ADP in the presence of a proton or sodium gradient. F-type ATPases consist of two structural domains, F(1) containing the extramembraneous catalytic core and F(0) containing the membrane proton channel, linked together by a central stalk and a peripheral stalk. During catalysis, ATP synthesis in the catalytic domain of F(1) is coupled via a rotary mechanism of the central stalk subunits to proton translocation. Its function is as follows. Key component of the F(0) channel; it plays a direct role in translocation across the membrane. A homomeric c-ring of between 10-14 subunits forms the central stalk rotor element with the F(1) delta and epsilon subunits. This chain is ATP synthase subunit c 2, found in Pelobacter propionicus (strain DSM 2379 / NBRC 103807 / OttBd1).